A 434-amino-acid polypeptide reads, in one-letter code: Tol-Pal system protein TolB (434 aa).

The N-terminal stretch at 1–21 (MIVRRALALAALALAASPALA) is a signal peptide. The segment at 411 to 434 (GDRQTPVTSGKTDLAAPAWGPLAP) is disordered.

It belongs to the TolB family. In terms of assembly, the Tol-Pal system is composed of five core proteins: the inner membrane proteins TolA, TolQ and TolR, the periplasmic protein TolB and the outer membrane protein Pal. They form a network linking the inner and outer membranes and the peptidoglycan layer.

It localises to the periplasm. Its function is as follows. Part of the Tol-Pal system, which plays a role in outer membrane invagination during cell division and is important for maintaining outer membrane integrity. This chain is Tol-Pal system protein TolB, found in Anaeromyxobacter sp. (strain K).